The chain runs to 157 residues: Protein Smg homolog (157 aa).

This sequence belongs to the Smg family.

The polypeptide is Protein Smg homolog (Photobacterium profundum (strain SS9)).